The primary structure comprises 137 residues: Lysozyme (137 aa).

Residues 1-18 (MQKLIIFALVVLCVGSEA) form the signal peptide. Positions 19 to 137 (KTFTRCGLVH…QGSLPDISSC (119 aa)) constitute a C-type lysozyme domain. Disulfide bonds link cysteine 24–cysteine 137, cysteine 45–cysteine 127, cysteine 79–cysteine 93, and cysteine 89–cysteine 107. Catalysis depends on residues glutamate 50 and aspartate 67.

The protein belongs to the glycosyl hydrolase 22 family.

It carries out the reaction Hydrolysis of (1-&gt;4)-beta-linkages between N-acetylmuramic acid and N-acetyl-D-glucosamine residues in a peptidoglycan and between N-acetyl-D-glucosamine residues in chitodextrins.. In terms of biological role, lysozymes have primarily a bacteriolytic function; those in tissues and body fluids are associated with the monocyte-macrophage system and enhance the activity of immunoagents. Active against E.coli and M.luteus. The polypeptide is Lysozyme (Bombyx mori (Silk moth)).